Here is a 481-residue protein sequence, read N- to C-terminus: Beta-1,3-glucan-binding protein (481 aa).

The first 17 residues, 1–17 (MKVLVVFIFCLVRSTFG), serve as a signal peptide directing secretion. The 105-residue stretch at 19–123 (FEVPDALVEV…QKFVVKQLLD (105 aa)) folds into the CBM39 domain. One can recognise a GH16 domain in the interval 211–481 (HRLTIRPVPS…EVDYVKVSAL (271 aa)). N-linked (GlcNAc...) asparagine glycosylation is present at Asn-467.

This sequence belongs to the insect beta-1,3-glucan binding protein family. The N-terminus is blocked. As to expression, hemolymph.

It is found in the secreted. In terms of biological role, involved in the recognition of invading microorganisms. Binds specifically to beta-1,3-glucan and activates the phenoloxidase cascade. The chain is Beta-1,3-glucan-binding protein (GRP) from Tenebrio molitor (Yellow mealworm beetle).